The primary structure comprises 281 residues: Pantothenate synthetase (281 aa).

M30 to H37 provides a ligand contact to ATP. H37 acts as the Proton donor in catalysis. Q61 provides a ligand contact to (R)-pantoate. Beta-alanine is bound at residue Q61. G147–D150 lines the ATP pocket. Q153 contributes to the (R)-pantoate binding site. Residues I176 and K184–R187 each bind ATP.

The protein belongs to the pantothenate synthetase family. In terms of assembly, homodimer.

It localises to the cytoplasm. The enzyme catalyses (R)-pantoate + beta-alanine + ATP = (R)-pantothenate + AMP + diphosphate + H(+). Its pathway is cofactor biosynthesis; (R)-pantothenate biosynthesis; (R)-pantothenate from (R)-pantoate and beta-alanine: step 1/1. Functionally, catalyzes the condensation of pantoate with beta-alanine in an ATP-dependent reaction via a pantoyl-adenylate intermediate. This chain is Pantothenate synthetase, found in Clostridium botulinum (strain Langeland / NCTC 10281 / Type F).